The following is a 443-amino-acid chain: Thymidine phosphorylase (443 aa).

It belongs to the thymidine/pyrimidine-nucleoside phosphorylase family. Homodimer.

It carries out the reaction thymidine + phosphate = 2-deoxy-alpha-D-ribose 1-phosphate + thymine. It participates in pyrimidine metabolism; dTMP biosynthesis via salvage pathway; dTMP from thymine: step 1/2. The enzymes which catalyze the reversible phosphorolysis of pyrimidine nucleosides are involved in the degradation of these compounds and in their utilization as carbon and energy sources, or in the rescue of pyrimidine bases for nucleotide synthesis. The sequence is that of Thymidine phosphorylase from Sodalis glossinidius (strain morsitans).